Consider the following 123-residue polypeptide: Small ribosomal subunit protein uS12 (123 aa).

The tract at residues 1–30 (MPTIQQLVRKGRQDKVEKNKTPALEGSPQR) is disordered. Residues 11-20 (GRQDKVEKNK) are compositionally biased toward basic and acidic residues. Position 89 is a 3-methylthioaspartic acid (aspartate 89).

Belongs to the universal ribosomal protein uS12 family. In terms of assembly, part of the 30S ribosomal subunit. Contacts proteins S8 and S17. May interact with IF1 in the 30S initiation complex.

Functionally, with S4 and S5 plays an important role in translational accuracy. Interacts with and stabilizes bases of the 16S rRNA that are involved in tRNA selection in the A site and with the mRNA backbone. Located at the interface of the 30S and 50S subunits, it traverses the body of the 30S subunit contacting proteins on the other side and probably holding the rRNA structure together. The combined cluster of proteins S8, S12 and S17 appears to hold together the shoulder and platform of the 30S subunit. The polypeptide is Small ribosomal subunit protein uS12 (rpsL) (Streptomyces avermitilis (strain ATCC 31267 / DSM 46492 / JCM 5070 / NBRC 14893 / NCIMB 12804 / NRRL 8165 / MA-4680)).